Here is a 188-residue protein sequence, read N- to C-terminus: Archaetidylinositol phosphate synthase (188 aa).

2 helical membrane passes run 20 to 40 and 51 to 71; these read LASL…ITLL and ILAG…GALA. 4 residues coordinate Mg(2+): Asp-64, Asp-67, Asp-85, and Asp-89. The active-site Proton acceptor is the Asp-89. 2 helical membrane passes run 96-116 and 147-167; these read ILFG…LTLI and IIII…YLVA.

It belongs to the CDP-alcohol phosphatidyltransferase class-I family. Requires Mn(2+) as cofactor. The cofactor is Mg(2+).

It is found in the cell membrane. It catalyses the reaction CDP-2,3-bis-O-(phytanyl)-sn-glycerol + 1D-myo-inositol 3-phosphate = saturated 1-archaetidyl-1D-myo-inositol 3-phosphate + CMP + H(+). It participates in lipid metabolism; phospholipid metabolism. In terms of biological role, catalyzes the formation of archaetidylinositol phosphate (AIP) from CDP-archaeol (CDP-ArOH or CDP-2,3-bis-(O-phytanyl)-sn-glycerol) and 1L-myo-inositol 1-phosphate (IP or 1D-myo-inositol 3-phosphate). AIP is a precursor of archaetidyl-myo-inositol (AI), an ether-type inositol phospholipid ubiquitously distributed in archaea membranes and essential for glycolipid biosynthesis in archaea. The polypeptide is Archaetidylinositol phosphate synthase (Pyrococcus horikoshii (strain ATCC 700860 / DSM 12428 / JCM 9974 / NBRC 100139 / OT-3)).